The sequence spans 75 residues: Rugosin-LK2 (75 aa).

Residues 1–24 (MFTMKKSLLFLFFLGTISLSFCEG) form the signal peptide. Residues 25–40 (ERSADEDDEGEMTEEE) constitute a propeptide that is removed on maturation.

As to expression, expressed by the skin glands.

Its subcellular location is the secreted. Functionally, has antimicrobial activity against Gram-positive bacteria S.aureus ATCC 2592 (MIC=10.0 uM), S.aureus ATCC 43300 (MIC=10.0 uM) and B.subtilis (MIC=30.0 uM), against Gram-negative bacteria E.coli ML-35P (MIC=10.0 uM), P.aeruginosa PA01 (MIC=2.5 uM) and P.aeruginosa ATCC 27853 (MIC=2.5 uM) and against fungus C.albicans ATCC 2002 (MIC=10.0 uM). The chain is Rugosin-LK2 from Limnonectes kuhlii (Kuhl's Creek frog).